A 159-amino-acid polypeptide reads, in one-letter code: Phosphopantetheine adenylyltransferase (159 aa).

Thr-10 contributes to the substrate binding site. ATP is bound by residues 10-11 (TF) and His-18. Substrate-binding residues include Lys-42, Met-74, and Arg-88. ATP contacts are provided by residues 89 to 91 (GLR), Glu-99, and 124 to 130 (WSFISSS).

Belongs to the bacterial CoaD family. Homohexamer. The cofactor is Mg(2+).

It localises to the cytoplasm. It catalyses the reaction (R)-4'-phosphopantetheine + ATP + H(+) = 3'-dephospho-CoA + diphosphate. It participates in cofactor biosynthesis; coenzyme A biosynthesis; CoA from (R)-pantothenate: step 4/5. In terms of biological role, reversibly transfers an adenylyl group from ATP to 4'-phosphopantetheine, yielding dephospho-CoA (dPCoA) and pyrophosphate. This Salmonella typhimurium (strain LT2 / SGSC1412 / ATCC 700720) protein is Phosphopantetheine adenylyltransferase.